A 408-amino-acid polypeptide reads, in one-letter code: MSWDQVWIDVNVATMDPSISAPYGAITHAAIAVKDGKIAWLGPRSELPAFDVLSIPVYRGKGGWITPGLIDAHTHLVFAGNRANEFELRLKGATYEEIARAGGGIISTVNACREADEAALFELGRQRLNALAKEGVTTVEIKSGYGLDTETELKILRVARELGKHHHVDVKTTFLGAHAVPPEYKGNSDGYVDLIINKMLPAVIKENLADAVDVFCENIAFNLEQTERVLSAAKAAGLQVKLHAEQLSNMGGSELAARLGAKSVDHIEYLDEAGVKALSESGTCAVLLPGAFYFLRETQKPPIDLLRQYGVPMVLASDFNPGSFPICSTLLMLNMGCTLFRLTPEEALAGLTLNAAKALGIEDKVGSLVVGKQADFCLWNIATPAQLAYSYGVNPCKDVVKNGKLVHQ.

His73 and His75 together coordinate Fe(3+). Zn(2+) contacts are provided by His73 and His75. 3 residues coordinate 4-imidazolone-5-propanoate: Arg82, Tyr145, and His178. N-formimidoyl-L-glutamate is bound at residue Tyr145. His243 contacts Fe(3+). His243 lines the Zn(2+) pocket. Gln246 contributes to the 4-imidazolone-5-propanoate binding site. Asp318 lines the Fe(3+) pocket. Asp318 contributes to the Zn(2+) binding site. Residues Asn320 and Gly322 each contribute to the N-formimidoyl-L-glutamate site. Ser323 serves as a coordination point for 4-imidazolone-5-propanoate.

This sequence belongs to the metallo-dependent hydrolases superfamily. HutI family. The cofactor is Zn(2+). Requires Fe(3+) as cofactor.

The protein localises to the cytoplasm. It carries out the reaction 4-imidazolone-5-propanoate + H2O = N-formimidoyl-L-glutamate. The protein operates within amino-acid degradation; L-histidine degradation into L-glutamate; N-formimidoyl-L-glutamate from L-histidine: step 3/3. Functionally, catalyzes the hydrolytic cleavage of the carbon-nitrogen bond in imidazolone-5-propanoate to yield N-formimidoyl-L-glutamate. It is the third step in the universal histidine degradation pathway. The sequence is that of Imidazolonepropionase from Shewanella oneidensis (strain ATCC 700550 / JCM 31522 / CIP 106686 / LMG 19005 / NCIMB 14063 / MR-1).